An 83-amino-acid polypeptide reads, in one-letter code: RNA-binding protein Hfq (83 aa).

The Sm domain occupies 11 to 71; the sequence is DTFLNFVRKN…ISTIMPGQPI (61 aa).

Belongs to the Hfq family. As to quaternary structure, homohexamer.

In terms of biological role, RNA chaperone that binds small regulatory RNA (sRNAs) and mRNAs to facilitate mRNA translational regulation in response to envelope stress, environmental stress and changes in metabolite concentrations. Also binds with high specificity to tRNAs. The sequence is that of RNA-binding protein Hfq from Methylocella silvestris (strain DSM 15510 / CIP 108128 / LMG 27833 / NCIMB 13906 / BL2).